Here is a 595-residue protein sequence, read N- to C-terminus: Mitoguardin 1 (595 aa).

A run of 2 helical transmembrane segments spans residues 11-31 (LPIK…YYSL) and 38-58 (TGTK…IIIA).

Belongs to the mitoguardin family. As to quaternary structure, homodimer and heterodimer; forms heterodimers with miga2.

The protein localises to the mitochondrion outer membrane. In terms of biological role, regulator of mitochondrial fusion: acts by forming homo- and heterodimers at the mitochondrial outer membrane and facilitating the formation of pld6/MitoPLD dimers. May act by regulating phospholipid metabolism via pld6/MitoPLD. This is Mitoguardin 1 from Danio rerio (Zebrafish).